Here is a 258-residue protein sequence, read N- to C-terminus: SMH class II histocompatibility antigen, beta-1 chain (258 aa).

A signal peptide spans 1–29 (MMVLPVPVAPWTAALTVLLMVLNKSVVQG). Positions 30–121 (RTTPENYLFR…LNQRLSQSLI (92 aa)) are beta-1. Topologically, residues 30–225 (RTTPENYLFR…RAQSDSARNK (196 aa)) are extracellular. Disulfide bonds link cysteine 44–cysteine 106 and cysteine 144–cysteine 200. Positions 122–215 (AQPKVHVSPS…SLDRPITVEW (94 aa)) are beta-2. One can recognise an Ig-like C1-type domain in the interval 124–212 (PKVHVSPSKG…EHPSLDRPIT (89 aa)). A connecting peptide region spans residues 216–225 (RAQSDSARNK). Asparagine 224 is a glycosylation site (N-linked (GlcNAc...) asparagine). The helical transmembrane segment at 226–246 (TLTGVGGLVLGLIFLAVGLIM) threads the bilayer. Topologically, residues 247–258 (HVRSKKAQRGSR) are cytoplasmic.

The protein belongs to the MHC class II family.

The protein localises to the membrane. This Spalax ehrenbergi (Middle East blind mole rat) protein is SMH class II histocompatibility antigen, beta-1 chain.